The primary structure comprises 977 residues: Pro-apoptotic serine protease NMA111 (977 aa).

The interval 1-36 (MTIQAHKRTLSEVSTSSVGQLKRREGYTEDYTDEGS) is disordered. Residues 64–254 (VVSVHFAQVA…LPLDRILRAL (191 aa)) are serine protease. Active-site charge relay system residues include histidine 102, aspartate 133, and serine 216. PDZ domains lie at 271 to 356 (QWLL…LVVQ) and 749 to 835 (SVLQ…VRKG).

This sequence belongs to the peptidase S1C family.

The protein localises to the nucleus. In terms of biological role, nuclear serine protease which mediates apoptosis. This chain is Pro-apoptotic serine protease NMA111 (NMA111), found in Eremothecium gossypii (strain ATCC 10895 / CBS 109.51 / FGSC 9923 / NRRL Y-1056) (Yeast).